Here is a 130-residue protein sequence, read N- to C-terminus: Small ribosomal subunit protein uS8 (130 aa).

Belongs to the universal ribosomal protein uS8 family.

The sequence is that of Small ribosomal subunit protein uS8 (RPS15A) from Strongylocentrotus purpuratus (Purple sea urchin).